Consider the following 728-residue polypeptide: Polyribonucleotide nucleotidyltransferase (728 aa).

Positions 503 and 509 each coordinate Mg(2+). Residues 570–629 form the KH domain; sequence PRLTTIKIPSDCIGMVIGKGGETIRGITEETGAEINIADDGTVTIACTTKEGTDAALATI. The S1 motif domain occupies 639-713; the sequence is GNIYVGKVRD…GKTKFALSIK (75 aa).

The protein belongs to the polyribonucleotide nucleotidyltransferase family. Requires Mg(2+) as cofactor.

The protein localises to the cytoplasm. It catalyses the reaction RNA(n+1) + phosphate = RNA(n) + a ribonucleoside 5'-diphosphate. Functionally, involved in mRNA degradation. Catalyzes the phosphorolysis of single-stranded polyribonucleotides processively in the 3'- to 5'-direction. This is Polyribonucleotide nucleotidyltransferase from Chlorobium chlorochromatii (strain CaD3).